A 201-amino-acid polypeptide reads, in one-letter code: Recombination protein RecR (201 aa).

The segment at 57–74 (CSICGNITATDTDPCVIC) adopts a C4-type zinc-finger fold. Positions 82 to 178 (STVFVVENSR…AVTRLAHGLA (97 aa)) constitute a Toprim domain.

It belongs to the RecR family.

Functionally, may play a role in DNA repair. It seems to be involved in an RecBC-independent recombinational process of DNA repair. It may act with RecF and RecO. The protein is Recombination protein RecR of Leuconostoc mesenteroides subsp. mesenteroides (strain ATCC 8293 / DSM 20343 / BCRC 11652 / CCM 1803 / JCM 6124 / NCDO 523 / NBRC 100496 / NCIMB 8023 / NCTC 12954 / NRRL B-1118 / 37Y).